Consider the following 1730-residue polypeptide: SH3 and multiple ankyrin repeat domains protein 3 (1730 aa).

An intramolecular interaction with the ANK repeats region spans residues 1–75; that stretch reads MDGPGASAVV…KFLDEERLLQ (75 aa). The residue at position 122 (Y122) is a Phosphotyrosine. ANK repeat units follow at residues 148 to 178, 182 to 211, 215 to 245, 249 to 278, 282 to 311, and 315 to 345; these read SGECPLSLAAQLDNATDLLKVLRNGGAHLDF, DGLTAVHCATRQRNAGALTTLLDLGASPDY, RGLTPLYHSALGGGDALCCELLLHDHAQLGT, NGWQEIHQACRFGHVQHLEHLLFYGANMGA, SGNTALHICALYNQESCARVLLFRGANKDV, and NSQTAFQVAIIAGNFELAEVIKTHKDSDVVP. The segment at 354 to 466 is disordered; that stretch reads KRRRLAGPSG…PPPRGPKRKL (113 aa). A phosphoserine mark is found at S373, S375, S387, and S394. Residues 404–415 show a composition bias toward basic and acidic residues; that stretch reads LQEEKDRDRDGE. Positions 444–460 are enriched in pro residues; sequence APGPGPASPAPPAPPPR. The SH3 domain maps to 470–529; that stretch reads VPGRKFIAVKAHSPQGEGEIPLHRGEAVKVLSIGEGGFWEGTVKGRTGWFPADCVEEVQM. Phosphoserine is present on S482. Y555 bears the Phosphotyrosine mark. The 95-residue stretch at 570–664 folds into the PDZ domain; sequence VAILQKRDHE…RLVMKVVSVT (95 aa). The interval 664 to 688 is disordered; it reads TRKPEEDGARRRAPPPPKRAPSTTL. The tract at residues 677–684 is required for interaction with ABI1; it reads PPPPKRAP. A phosphoserine mark is found at S694, S781, S790, and S801. 2 disordered regions span residues 760–1460 and 1475–1524; these read QGLP…AAGP and GDPV…SLLD. Residues 812–844 are compositionally biased toward pro residues; it reads IPPPPQTAPPPPPAPYYFDSGPPPTFSPPPPPG. Residues 857–869 are compositionally biased toward low complexity; sequence GLEARLGAGAAGL. S890 and S897 each carry phosphoserine. T912 is modified (phosphothreonine). Residue Y930 is modified to Phosphotyrosine. Asymmetric dimethylarginine is present on R965. Phosphoserine is present on S995. Positions 1016–1026 are enriched in basic and acidic residues; sequence VKERRLEERRR. The segment covering 1078–1092 has biased composition (low complexity); the sequence is LKPLVGGPSLGPSGS. Residues 1122-1131 are compositionally biased toward polar residues; the sequence is SQTPSRSPTP. Phosphothreonine is present on T1130. S1134, S1159, S1163, and S1166 each carry phosphoserine. Positions 1174–1194 are enriched in basic and acidic residues; that stretch reads ARREAEKPPREERKSPEDKKS. Phosphothreonine is present on T1234. Residues 1235–1250 show a composition bias toward low complexity; that stretch reads PELAPAPMQAAAVAEP. Composition is skewed to pro residues over residues 1251 to 1261 and 1321 to 1333; these read MPSPRAQPPGS and TPPPGPGPLPTTV. The residue at position 1253 (S1253) is a Phosphoserine. Residues 1360-1370 show a composition bias toward basic and acidic residues; sequence ADTRSSSDPHL. A compositionally biased stretch (low complexity) spans 1371-1392; the sequence is ETTSTISTVSSMSTLSSESGEL. The SH3-binding signature appears at 1410–1416; it reads PPVPPKP. S1420 is subject to Phosphoserine. Residues 1494-1514 adopt a coiled-coil conformation; it reads ISELSSRLQQLNKDTRSLGEE. Residues 1495-1505 show a composition bias toward polar residues; the sequence is SELSSRLQQLN. 4 positions are modified to phosphoserine: S1510, S1521, S1529, and S1539. Disordered regions lie at residues 1546–1584 and 1627–1663; these read ISAQRSPGGPGGGASYSVRPSGRYPVARRAPSPVKPASL and VRSVSARSRSPSPSPLPSPSPGSGPSAGPRRPFQQKP. Over residues 1627–1637 the composition is skewed to low complexity; it reads VRSVSARSRSP. A phosphoserine mark is found at S1634, S1636, and S1638. A compositionally biased stretch (pro residues) spans 1638–1648; that stretch reads SPSPLPSPSPG. Low complexity predominate over residues 1649–1658; it reads SGPSAGPRRP. The 64-residue stretch at 1667 to 1730 folds into the SAM domain; that stretch reads WSKFDVGDWL…ERALRQLDGS (64 aa).

The protein belongs to the SHANK family. May homomultimerize via its SAM domain. Interacts with BAIAP2, DBNL and SLC17A7/VGLUT1. Interacts with DLGAP1/GKAP, GRM1/MGLUR1, GRM5/MGLUR5 and LZTS3 C-termini via its PDZ domain. Interacts with ABI1, HOMER1, HOMER2, HOMER3 and CTTN/cortactin SH3 domain. Is part of a complex with DLG4/PSD-95 and DLGAP1/GKAP. Interacts (via PDZ domain) with the GRIA1 subunit of the AMPA receptor (via PDZ-binding motif). Interacts with WASF1 and CYFIP2; the interactions mediate the association of SHANK3 with the WAVE1 complex. Interacts with ARPC2; the interaction probably mediates the association of SHANK3 with the Arp2/3 complex. Interacts (via ANK repeats) with SHARPIN and SPTAN1. Interacts (via PDZ domain) with ARHGAP44 (probably via PDZ-binding motif); the interaction takes place in dendritic spines and promotes GRIA1 exocytosis. Interacts with CAMK2A. Interacts with DIP2A. Interacts with ADGRL3. In terms of tissue distribution, in brain, highly expressed in striatum, thalamus, hippocampus and granule cells of the cerebellum.

Its subcellular location is the cytoplasm. It localises to the synapse. It is found in the postsynaptic density. The protein localises to the cell projection. The protein resides in the dendritic spine. Major scaffold postsynaptic density protein which interacts with multiple proteins and complexes to orchestrate the dendritic spine and synapse formation, maturation and maintenance. Interconnects receptors of the postsynaptic membrane including NMDA-type and metabotropic glutamate receptors via complexes with GKAP/PSD-95 and HOMER, respectively, and the actin-based cytoskeleton. Plays a role in the structural and functional organization of the dendritic spine and synaptic junction through the interaction with Arp2/3 and WAVE1 complex as well as the promotion of the F-actin clusters. By way of this control of actin dynamics, participates in the regulation of developing neurons growth cone motility and the NMDA receptor-signaling. Also modulates GRIA1 exocytosis and GRM5/MGLUR5 expression and signaling to control the AMPA and metabotropic glutamate receptor-mediated synaptic transmission and plasticity. May be required at an early stage of synapse formation and be inhibited by IGF1 to promote synapse maturation. This chain is SH3 and multiple ankyrin repeat domains protein 3 (Shank3), found in Mus musculus (Mouse).